The chain runs to 629 residues: tRNA uridine 5-carboxymethylaminomethyl modification enzyme MnmG (629 aa).

Position 13 to 18 (G13 to G18) interacts with FAD. An NAD(+)-binding site is contributed by G273 to F287.

This sequence belongs to the MnmG family. As to quaternary structure, homodimer. Heterotetramer of two MnmE and two MnmG subunits. The cofactor is FAD.

It localises to the cytoplasm. Its function is as follows. NAD-binding protein involved in the addition of a carboxymethylaminomethyl (cmnm) group at the wobble position (U34) of certain tRNAs, forming tRNA-cmnm(5)s(2)U34. This Colwellia psychrerythraea (strain 34H / ATCC BAA-681) (Vibrio psychroerythus) protein is tRNA uridine 5-carboxymethylaminomethyl modification enzyme MnmG.